Reading from the N-terminus, the 72-residue chain is SRY-related protein MG42 (72 aa).

The segment at residues 1 to 69 is a DNA-binding region (HMG box); that stretch reads VKRPMNAFMV…KHMADYPNYK (69 aa).

The protein resides in the nucleus. This Tarentola mauritanica (Common wall gecko) protein is SRY-related protein MG42.